Consider the following 289-residue polypeptide: Ribosomal protein L11 methyltransferase (289 aa).

4 residues coordinate S-adenosyl-L-methionine: T134, G155, D177, and N225.

It belongs to the methyltransferase superfamily. PrmA family.

It localises to the cytoplasm. The enzyme catalyses L-lysyl-[protein] + 3 S-adenosyl-L-methionine = N(6),N(6),N(6)-trimethyl-L-lysyl-[protein] + 3 S-adenosyl-L-homocysteine + 3 H(+). In terms of biological role, methylates ribosomal protein L11. The sequence is that of Ribosomal protein L11 methyltransferase from Parasynechococcus marenigrum (strain WH8102).